Reading from the N-terminus, the 221-residue chain is Fanconi anemia core complex-associated protein 24 (221 aa).

Belongs to the multisubunit FA complex composed of FANCA, FANCB, FANCC, FANCE, FANCF, FANCG, FANCL/PHF9, FANCM and FAAP24. Interacts with FANCM.

It localises to the nucleus. Functionally, plays a role in DNA repair through recruitment of the FA core complex to damaged DNA. Regulates FANCD2 monoubiquitination upon DNA damage. Induces chromosomal instability as well as hypersensitivity to DNA cross-linking agents, when repressed. Targets FANCM/FAAP24 complex to the DNA, preferentially to single strand DNA. This chain is Fanconi anemia core complex-associated protein 24, found in Mus musculus (Mouse).